A 484-amino-acid chain; its full sequence is Adenylyltransferase and sulfurtransferase uba4 (484 aa).

Positions 39 to 49 (AKAQSAAATTA) are enriched in low complexity. The tract at residues 39-58 (AKAQSAAATTAGDNHDKPRR) is disordered. ATP is bound by residues G98, D119, 126–130 (SNLHR), K143, and 187–188 (DN). Zn(2+)-binding residues include C236 and C239. C253 serves as the catalytic Glycyl thioester intermediate; for adenylyltransferase activity. The Zn(2+) site is built by C313 and C316. Residues 370–482 (PEKTPTLIDV…WREQVDPEWP (113 aa)) form the Rhodanese domain. Catalysis depends on C437, which acts as the Cysteine persulfide intermediate; for sulfurtransferase activity.

The protein in the N-terminal section; belongs to the HesA/MoeB/ThiF family. UBA4 subfamily. The cofactor is Zn(2+).

It is found in the cytoplasm. It localises to the cytosol. It catalyses the reaction [molybdopterin-synthase sulfur-carrier protein]-C-terminal Gly-Gly + ATP + H(+) = [molybdopterin-synthase sulfur-carrier protein]-C-terminal Gly-Gly-AMP + diphosphate. The catalysed reaction is [molybdopterin-synthase sulfur-carrier protein]-C-terminal Gly-Gly-AMP + S-sulfanyl-L-cysteinyl-[cysteine desulfurase] + AH2 = [molybdopterin-synthase sulfur-carrier protein]-C-terminal-Gly-aminoethanethioate + L-cysteinyl-[cysteine desulfurase] + A + AMP + 2 H(+). It participates in tRNA modification; 5-methoxycarbonylmethyl-2-thiouridine-tRNA biosynthesis. Its pathway is cofactor biosynthesis; molybdopterin biosynthesis. Functionally, plays a central role in 2-thiolation of mcm(5)S(2)U at tRNA wobble positions of cytosolic tRNA(Lys), tRNA(Glu) and tRNA(Gln). Also essential during biosynthesis of the molybdenum cofactor. Acts by mediating the C-terminal thiocarboxylation of sulfur carriers urm1 and mocs2a. Its N-terminus first activates urm1 and mocs2a as acyl-adenylates (-COAMP), then the persulfide sulfur on the catalytic cysteine is transferred to urm1 and mocs2a to form thiocarboxylation (-COSH) of their C-terminus. The reaction probably involves hydrogen sulfide that is generated from the persulfide intermediate and that acts as a nucleophile towards urm1 and mocs2a. Subsequently, a transient disulfide bond is formed. Does not use thiosulfate as sulfur donor; nfs1 probably acting as a sulfur donor for thiocarboxylation reactions. This chain is Adenylyltransferase and sulfurtransferase uba4, found in Aspergillus terreus (strain NIH 2624 / FGSC A1156).